Reading from the N-terminus, the 276-residue chain is MRPDPAPLDPTDASPAQARRHQPGLGVEVSAGAHRSGDRVRRGVVSFVRRSPRMNVSQQRAMNTLASTYLIDVPRDATSTSVAPGSRLDLPAIFGRTAPLTVEIGVGSGDVLAALAAAHPERDFIGFEVYLPSIATTLNKLENAGASNARVIMADATAGLDHLFGPADLDELWTFFADPWHKKRHHKRRIVNPDTARLVTSRLRPGGLWRLATDWDDYAHWMLEVLSAEPLLKPVDAGPDGFSPRWPERPVTRYENKGLTAGRTIHDLTWRRVDES.

A disordered region spans residues 1 to 23 (MRPDPAPLDPTDASPAQARRHQP). S-adenosyl-L-methionine-binding residues include E103, E128, D155, and D178. Residue D178 is part of the active site. Substrate contacts are provided by residues K182, D214, and 252-255 (TRYE).

This sequence belongs to the class I-like SAM-binding methyltransferase superfamily. TrmB family.

It carries out the reaction guanosine(46) in tRNA + S-adenosyl-L-methionine = N(7)-methylguanosine(46) in tRNA + S-adenosyl-L-homocysteine. It participates in tRNA modification; N(7)-methylguanine-tRNA biosynthesis. Functionally, catalyzes the formation of N(7)-methylguanine at position 46 (m7G46) in tRNA. This Cutibacterium acnes (strain DSM 16379 / KPA171202) (Propionibacterium acnes) protein is tRNA (guanine-N(7)-)-methyltransferase.